The chain runs to 356 residues: Nicotinate-nucleotide--dimethylbenzimidazole phosphoribosyltransferase (356 aa).

Catalysis depends on Glu317, which acts as the Proton acceptor.

It belongs to the CobT family. As to quaternary structure, homodimer.

The enzyme catalyses 5,6-dimethylbenzimidazole + nicotinate beta-D-ribonucleotide = alpha-ribazole 5'-phosphate + nicotinate + H(+). Its pathway is nucleoside biosynthesis; alpha-ribazole biosynthesis; alpha-ribazole from 5,6-dimethylbenzimidazole: step 1/2. Functionally, catalyzes the synthesis of alpha-ribazole-5'-phosphate from nicotinate mononucleotide (NAMN) and 5,6-dimethylbenzimidazole (DMB). This is Nicotinate-nucleotide--dimethylbenzimidazole phosphoribosyltransferase from Salmonella paratyphi A (strain AKU_12601).